The chain runs to 225 residues: Vacuolar protein sorting-associated protein 2 homolog 1 (225 aa).

The stretch at 13-54 forms a coiled coil; that stretch reads AELLRENKRMLDKSIREIERERQGLQTQEKKLINEIKKTAKQ.

This sequence belongs to the SNF7 family. In terms of assembly, component of the endosomal sorting required for transport complex III (ESCRT-III), composed at least of VPS2, VPS20, VPS24 and VPS32. Interacts with SKD1.

The protein localises to the endosome. In terms of biological role, component of the ESCRT-III complex, which is required for multivesicular bodies (MVBs) formation and sorting of endosomal cargo proteins into MVBs. The ESCRT-III complex is probably involved in the concentration of MVB cargo. This is Vacuolar protein sorting-associated protein 2 homolog 1 (VPS2.1) from Arabidopsis thaliana (Mouse-ear cress).